A 251-amino-acid chain; its full sequence is HTH-type transcriptional regulator UlaR (251 aa).

An HTH deoR-type domain is found at 3 to 58 (EAQRHQILLEMLAQLGFVTVEKVVERLGISPATARRDINKLDESGKLKKVRNGAEA). Residues 20 to 39 (VTVEKVVERLGISPATARRD) constitute a DNA-binding region (H-T-H motif).

The protein localises to the cytoplasm. In terms of biological role, represses ulaG and the ulaABCDEF operon. The sequence is that of HTH-type transcriptional regulator UlaR from Escherichia coli (strain SMS-3-5 / SECEC).